We begin with the raw amino-acid sequence, 388 residues long: Succinate--CoA ligase [ADP-forming] subunit beta (388 aa).

Positions 9-244 (KEILRKYGVT…LDEEDPAEIE (236 aa)) constitute an ATP-grasp domain. ATP is bound by residues Lys-46, 53-55 (GRG), Glu-99, Ala-102, and Glu-107. Positions 199 and 213 each coordinate Mg(2+). Residues Asn-264 and 321-323 (GIM) contribute to the substrate site.

This sequence belongs to the succinate/malate CoA ligase beta subunit family. Heterotetramer of two alpha and two beta subunits. Mg(2+) serves as cofactor.

It catalyses the reaction succinate + ATP + CoA = succinyl-CoA + ADP + phosphate. The catalysed reaction is GTP + succinate + CoA = succinyl-CoA + GDP + phosphate. The protein operates within carbohydrate metabolism; tricarboxylic acid cycle; succinate from succinyl-CoA (ligase route): step 1/1. Its function is as follows. Succinyl-CoA synthetase functions in the citric acid cycle (TCA), coupling the hydrolysis of succinyl-CoA to the synthesis of either ATP or GTP and thus represents the only step of substrate-level phosphorylation in the TCA. The beta subunit provides nucleotide specificity of the enzyme and binds the substrate succinate, while the binding sites for coenzyme A and phosphate are found in the alpha subunit. The sequence is that of Succinate--CoA ligase [ADP-forming] subunit beta from Herminiimonas arsenicoxydans.